The following is a 171-amino-acid chain: ATP synthase subunit b (171 aa).

Residues 19–39 (VGVGLILFIAIVIWAKAPAMI) form a helical membrane-spanning segment.

Belongs to the ATPase B chain family. In terms of assembly, F-type ATPases have 2 components, F(1) - the catalytic core - and F(0) - the membrane proton channel. F(1) has five subunits: alpha(3), beta(3), gamma(1), delta(1), epsilon(1). F(0) has three main subunits: a(1), b(2) and c(10-14). The alpha and beta chains form an alternating ring which encloses part of the gamma chain. F(1) is attached to F(0) by a central stalk formed by the gamma and epsilon chains, while a peripheral stalk is formed by the delta and b chains.

It localises to the cell inner membrane. Functionally, f(1)F(0) ATP synthase produces ATP from ADP in the presence of a proton or sodium gradient. F-type ATPases consist of two structural domains, F(1) containing the extramembraneous catalytic core and F(0) containing the membrane proton channel, linked together by a central stalk and a peripheral stalk. During catalysis, ATP synthesis in the catalytic domain of F(1) is coupled via a rotary mechanism of the central stalk subunits to proton translocation. Its function is as follows. Component of the F(0) channel, it forms part of the peripheral stalk, linking F(1) to F(0). This is ATP synthase subunit b from Caulobacter sp. (strain K31).